The following is a 699-amino-acid chain: Elongation factor G (699 aa).

One can recognise a tr-type G domain in the interval 8 to 289; that stretch reads ERYRNIGISA…AVVEYMPAPT (282 aa). GTP is bound by residues 17-24, 88-92, and 142-145; these read AHIDAGKT, DTPGH, and NKMD.

The protein belongs to the TRAFAC class translation factor GTPase superfamily. Classic translation factor GTPase family. EF-G/EF-2 subfamily.

It is found in the cytoplasm. Its function is as follows. Catalyzes the GTP-dependent ribosomal translocation step during translation elongation. During this step, the ribosome changes from the pre-translocational (PRE) to the post-translocational (POST) state as the newly formed A-site-bound peptidyl-tRNA and P-site-bound deacylated tRNA move to the P and E sites, respectively. Catalyzes the coordinated movement of the two tRNA molecules, the mRNA and conformational changes in the ribosome. In Variovorax paradoxus (strain S110), this protein is Elongation factor G.